We begin with the raw amino-acid sequence, 327 residues long: tRNA uridine(34) hydroxylase (327 aa).

The 95-residue stretch at 123–217 folds into the Rhodanese domain; it reads SDPEVLLVDT…YLEEVKLEES (95 aa). Catalysis depends on Cys177, which acts as the Cysteine persulfide intermediate.

It belongs to the TrhO family.

It catalyses the reaction uridine(34) in tRNA + AH2 + O2 = 5-hydroxyuridine(34) in tRNA + A + H2O. In terms of biological role, catalyzes oxygen-dependent 5-hydroxyuridine (ho5U) modification at position 34 in tRNAs. The sequence is that of tRNA uridine(34) hydroxylase from Shewanella pealeana (strain ATCC 700345 / ANG-SQ1).